A 276-amino-acid chain; its full sequence is Alpha N-terminal protein methyltransferase 1 (276 aa).

A disordered region spans residues 1-57 (MTTTLEEQLSDKLQMMDETTDKVQGSSKQKDDSSIAASSDAKTASPSSSDSSTKVAA). Low complexity predominate over residues 34–57 (SIAASSDAKTASPSSSDSSTKVAA). S-adenosyl-L-methionine-binding positions include Gly-114, Arg-119, 136–138 (EQD), 167–168 (LQ), and Gln-182.

The protein belongs to the methyltransferase superfamily. NTM1 family.

The catalysed reaction is N-terminal L-alanyl-L-prolyl-L-lysyl-[protein] + 3 S-adenosyl-L-methionine = N-terminal N,N,N-trimethyl-L-alanyl-L-prolyl-L-lysyl-[protein] + 3 S-adenosyl-L-homocysteine + 3 H(+). It catalyses the reaction N-terminal L-seryl-L-prolyl-L-lysyl-[protein] + 3 S-adenosyl-L-methionine = N-terminal N,N,N-trimethyl-L-seryl-L-prolyl-L-lysyl-[protein] + 3 S-adenosyl-L-homocysteine + 3 H(+). It carries out the reaction N-terminal L-prolyl-L-prolyl-L-lysyl-[protein] + 2 S-adenosyl-L-methionine = N-terminal N,N-dimethyl-L-prolyl-L-prolyl-L-lysyl-[protein] + 2 S-adenosyl-L-homocysteine + 2 H(+). Alpha-N-methyltransferase that methylates the N-terminus of target proteins containing the N-terminal motif [Ala/Pro/Ser]-Pro-Lys when the initiator Met is cleaved. Specifically catalyzes mono-, di- or tri-methylation of exposed alpha-amino group of Ala or Ser residue in the [Ala/Ser]-Pro-Lys motif and mono- or di-methylation of Pro in the Pro-Pro-Lys motif. The protein is Alpha N-terminal protein methyltransferase 1 (Ntmt) of Drosophila melanogaster (Fruit fly).